The sequence spans 652 residues: DNA ligase (652 aa).

NAD(+) contacts are provided by residues 29–33 (DSEYD), 78–79 (SL), and E107. K109 serves as the catalytic N6-AMP-lysine intermediate. NAD(+) contacts are provided by R130, E164, K278, and K302. Residues C395, C398, C413, and C418 each coordinate Zn(2+). The 76-residue stretch at 577-652 (VADAALSGLT…VRDEAWLESL (76 aa)) folds into the BRCT domain.

This sequence belongs to the NAD-dependent DNA ligase family. LigA subfamily. Mg(2+) serves as cofactor. Requires Mn(2+) as cofactor.

It carries out the reaction NAD(+) + (deoxyribonucleotide)n-3'-hydroxyl + 5'-phospho-(deoxyribonucleotide)m = (deoxyribonucleotide)n+m + AMP + beta-nicotinamide D-nucleotide.. Its function is as follows. DNA ligase that catalyzes the formation of phosphodiester linkages between 5'-phosphoryl and 3'-hydroxyl groups in double-stranded DNA using NAD as a coenzyme and as the energy source for the reaction. It is essential for DNA replication and repair of damaged DNA. The chain is DNA ligase from Streptococcus pneumoniae (strain Taiwan19F-14).